Reading from the N-terminus, the 125-residue chain is Calcitonin receptor-stimulating peptide 1 (125 aa).

The signal sequence occupies residues 1–25 (MGFWKFPPFLVLSILVLYQAGMFHA). The propeptide occupies 26–77 (APFRSVFDGRFDPATLDEEESRLLLAAMVNDYEQMRARESEKAQKTEGSRIQ). Cysteines 81 and 86 form a disulfide.

Belongs to the calcitonin family.

The protein resides in the secreted. Functionally, stimulates cAMP production in porcine kidney cell line LLC-PK1 via the calcitonin receptor (CT) but not via the CT-like (CL) receptor. This chain is Calcitonin receptor-stimulating peptide 1 (CRSP1), found in Capra hircus (Goat).